Reading from the N-terminus, the 184-residue chain is NADH-quinone oxidoreductase subunit B 2 (184 aa).

Residues Cys59, Cys60, Cys125, and Cys153 each coordinate [4Fe-4S] cluster.

Belongs to the complex I 20 kDa subunit family. NDH-1 is composed of 14 different subunits. Subunits NuoB, C, D, E, F, and G constitute the peripheral sector of the complex. The cofactor is [4Fe-4S] cluster.

The protein localises to the cell inner membrane. It catalyses the reaction a quinone + NADH + 5 H(+)(in) = a quinol + NAD(+) + 4 H(+)(out). Its function is as follows. NDH-1 shuttles electrons from NADH, via FMN and iron-sulfur (Fe-S) centers, to quinones in the respiratory chain. Couples the redox reaction to proton translocation (for every two electrons transferred, four hydrogen ions are translocated across the cytoplasmic membrane), and thus conserves the redox energy in a proton gradient. The protein is NADH-quinone oxidoreductase subunit B 2 of Solibacter usitatus (strain Ellin6076).